A 55-amino-acid chain; its full sequence is Large ribosomal subunit protein bL33 (55 aa).

It belongs to the bacterial ribosomal protein bL33 family.

This chain is Large ribosomal subunit protein bL33, found in Paramagnetospirillum magneticum (strain ATCC 700264 / AMB-1) (Magnetospirillum magneticum).